The primary structure comprises 968 residues: RNA polymerase-associated protein RapA (968 aa).

Residues 164 to 334 form the Helicase ATP-binding domain; it reads DVGRRHAPRV…FARLRLLDPN (171 aa). 177-184 contacts ATP; it reads DEVGLGKT. A DEAH box motif is present at residues 280–283; that stretch reads DEAH. In terms of domain architecture, Helicase C-terminal spans 490–644; it reads RVEWLMGYLT…TCPTGRTVYD (155 aa).

The protein belongs to the SNF2/RAD54 helicase family. RapA subfamily. As to quaternary structure, interacts with the RNAP. Has a higher affinity for the core RNAP than for the holoenzyme. Its ATPase activity is stimulated by binding to RNAP.

Functionally, transcription regulator that activates transcription by stimulating RNA polymerase (RNAP) recycling in case of stress conditions such as supercoiled DNA or high salt concentrations. Probably acts by releasing the RNAP, when it is trapped or immobilized on tightly supercoiled DNA. Does not activate transcription on linear DNA. Probably not involved in DNA repair. This Klebsiella pneumoniae subsp. pneumoniae (strain ATCC 700721 / MGH 78578) protein is RNA polymerase-associated protein RapA.